The sequence spans 106 residues: HIG1 domain family member 2A, mitochondrial (106 aa).

The residue at position 2 (Ala-2) is an N-acetylalanine. Positions 20–106 constitute an HIG1 domain; sequence VIEGLSPTVY…LAVTAMKSRP (87 aa). The next 2 helical transmembrane spans lie at 47–67 and 83–103; these read PVVP…LYSF and IAAQ…TAMK. The Mitochondrial matrix portion of the chain corresponds to 104–106; sequence SRP.

Associates with cytochrome c oxidase (COX, complex IV); proposed complex component.

The protein resides in the mitochondrion membrane. The protein localises to the mitochondrion inner membrane. Its function is as follows. Proposed subunit of cytochrome c oxidase (COX, complex IV), which is the terminal component of the mitochondrial respiratory chain that catalyzes the reduction of oxygen to water. May be involved in cytochrome c oxidase activity. May play a role in the assembly of respiratory supercomplexes. This chain is HIG1 domain family member 2A, mitochondrial (HIGD2A), found in Homo sapiens (Human).